A 183-amino-acid polypeptide reads, in one-letter code: Apo-citrate lyase phosphoribosyl-dephospho-CoA transferase (183 aa).

Belongs to the CitX family.

The enzyme catalyses apo-[citrate lyase ACP] + 2'-(5''-triphospho-alpha-D-ribosyl)-3'-dephospho-CoA = holo-[citrate lyase ACP] + diphosphate. Transfers 2-(5''-triphosphoribosyl)-3'-dephosphocoenzyme-A on a serine residue to the apo-acyl carrier protein (gamma chain) of the citrate lyase to yield holo-acyl carrier protein. The sequence is that of Apo-citrate lyase phosphoribosyl-dephospho-CoA transferase from Citrobacter koseri (strain ATCC BAA-895 / CDC 4225-83 / SGSC4696).